We begin with the raw amino-acid sequence, 194 residues long: Molybdenum cofactor guanylyltransferase (194 aa).

Residues 12 to 14 (LAG), K25, N53, D70, and D100 each bind GTP. Residue D100 participates in Mg(2+) binding.

Belongs to the MobA family. In terms of assembly, monomer. It depends on Mg(2+) as a cofactor.

The protein localises to the cytoplasm. It catalyses the reaction Mo-molybdopterin + GTP + H(+) = Mo-molybdopterin guanine dinucleotide + diphosphate. Its function is as follows. Transfers a GMP moiety from GTP to Mo-molybdopterin (Mo-MPT) cofactor (Moco or molybdenum cofactor) to form Mo-molybdopterin guanine dinucleotide (Mo-MGD) cofactor. The chain is Molybdenum cofactor guanylyltransferase from Aliivibrio salmonicida (strain LFI1238) (Vibrio salmonicida (strain LFI1238)).